The following is a 152-amino-acid chain: Pleckstrin homology-like domain family A member 2 (152 aa).

Phosphoserine is present on residues serine 3 and serine 42. The 93-residue stretch at 7-99 folds into the PH domain; the sequence is VLREGELEKR…WNAAIALALI (93 aa). The tract at residues 112–152 is disordered; it reads SRQERTAPAAPAEDAVAAAAAAPSEPSEPSRPSPQPKPRTP. A compositionally biased stretch (low complexity) spans 118-138; it reads APAAPAEDAVAAAAAAPSEPS. The segment covering 140–152 has biased composition (pro residues); that stretch reads PSRPSPQPKPRTP. 2 positions are modified to phosphoserine: serine 141 and serine 144. Threonine 151 bears the Phosphothreonine mark.

Belongs to the PHLDA2 family. In terms of tissue distribution, expressed in placenta and adult prostate gland. In placenta, it is present in all cells of the villous cytotrophoblast. The protein is absent in cells from hydatidiform moles. Hydatidiform mole is a gestation characterized by abnormal development of both fetus and trophoblast. The majority of hydatidiform moles are associated with an excess of paternal to maternal genomes and are likely to result from the abnormal expression of imprinted genes (at protein level). Expressed at low levels in adult liver and lung, and fetal liver. Expressed in adult brain and neuroblastoma, medullablastoma and glioblastoma cell lines.

It localises to the cytoplasm. The protein resides in the membrane. Plays a role in regulating placenta growth. May act via its PH domain that competes with other PH domain-containing proteins, thereby preventing their binding to membrane lipids. This Homo sapiens (Human) protein is Pleckstrin homology-like domain family A member 2 (PHLDA2).